We begin with the raw amino-acid sequence, 115 residues long: Skin calcitonin gene-related peptide (115 aa).

An N-terminal signal peptide occupies residues 1–25 (MVLLKISSLLAVLGLLVCQMYSSQA). Positions 26-69 (APARRALEPLPDRVTEAHRLLRALIRELTAEDMEASSSGAAHKR) are cleaved as a propeptide — removed in mature form by a carboxypeptidase. C71 and C76 form a disulfide bridge. A Phenylalanine amide modification is found at F106. A propeptide spans 107–115 (GRRRRSLHV) (removed in mature form by an endoprotease).

In terms of tissue distribution, skin, intestine and brain.

The protein localises to the secreted. Its function is as follows. CGRP induces vasodilation. It dilates a variety of vessels including the coronary, cerebral and systemic vasculature. Its abundance in the CNS also points toward a neurotransmitter or neuromodulator role. The chain is Skin calcitonin gene-related peptide from Phyllomedusa bicolor (Two-colored leaf frog).